The following is a 273-amino-acid chain: Formamidopyrimidine-DNA glycosylase (273 aa).

Pro2 (schiff-base intermediate with DNA) is an active-site residue. Glu3 acts as the Proton donor in catalysis. Lys58 acts as the Proton donor; for beta-elimination activity in catalysis. DNA-binding residues include His92, Arg111, and Arg153. The FPG-type zinc-finger motif lies at Arg238–Tyr272. Arg262 functions as the Proton donor; for delta-elimination activity in the catalytic mechanism.

Belongs to the FPG family. Monomer. Requires Zn(2+) as cofactor.

The enzyme catalyses Hydrolysis of DNA containing ring-opened 7-methylguanine residues, releasing 2,6-diamino-4-hydroxy-5-(N-methyl)formamidopyrimidine.. It carries out the reaction 2'-deoxyribonucleotide-(2'-deoxyribose 5'-phosphate)-2'-deoxyribonucleotide-DNA = a 3'-end 2'-deoxyribonucleotide-(2,3-dehydro-2,3-deoxyribose 5'-phosphate)-DNA + a 5'-end 5'-phospho-2'-deoxyribonucleoside-DNA + H(+). Its function is as follows. Involved in base excision repair of DNA damaged by oxidation or by mutagenic agents. Acts as a DNA glycosylase that recognizes and removes damaged bases. Has a preference for oxidized purines, such as 7,8-dihydro-8-oxoguanine (8-oxoG). Has AP (apurinic/apyrimidinic) lyase activity and introduces nicks in the DNA strand. Cleaves the DNA backbone by beta-delta elimination to generate a single-strand break at the site of the removed base with both 3'- and 5'-phosphates. The protein is Formamidopyrimidine-DNA glycosylase of Rickettsia canadensis (strain McKiel).